A 141-amino-acid polypeptide reads, in one-letter code: Regulator of ribonuclease activity B (141 aa).

A compositionally biased stretch (acidic residues) spans 119–132 (DEDFDDEDDDEDYD). The tract at residues 119–141 (DEDFDDEDDDEDYDKDGFPIERH) is disordered.

It belongs to the RraB family. Interacts with the C-terminal region of Rne.

The protein resides in the cytoplasm. Its function is as follows. Globally modulates RNA abundance by binding to RNase E (Rne) and regulating its endonucleolytic activity. Can modulate Rne action in a substrate-dependent manner by altering the composition of the degradosome. In Shewanella amazonensis (strain ATCC BAA-1098 / SB2B), this protein is Regulator of ribonuclease activity B.